Reading from the N-terminus, the 465-residue chain is Cysteine--tRNA ligase (465 aa).

Cys-28 serves as a coordination point for Zn(2+). Positions 30–40 (PTVYNYIHIGN) match the 'HIGH' region motif. 3 residues coordinate Zn(2+): Cys-208, His-233, and Glu-237. The short motif at 265-269 (KMSKS) is the 'KMSKS' region element. Lys-268 contributes to the ATP binding site.

It belongs to the class-I aminoacyl-tRNA synthetase family. As to quaternary structure, monomer. The cofactor is Zn(2+).

The protein resides in the cytoplasm. It catalyses the reaction tRNA(Cys) + L-cysteine + ATP = L-cysteinyl-tRNA(Cys) + AMP + diphosphate. The polypeptide is Cysteine--tRNA ligase (Exiguobacterium sibiricum (strain DSM 17290 / CCUG 55495 / CIP 109462 / JCM 13490 / 255-15)).